We begin with the raw amino-acid sequence, 199 residues long: Recombination protein RecR (199 aa).

The C4-type zinc finger occupies 57 to 72 (CSSCRTFTEESLCPIC). The 96-residue stretch at 81–176 (DLICVVETPA…NVSRIAHGVP (96 aa)) folds into the Toprim domain.

It belongs to the RecR family.

In terms of biological role, may play a role in DNA repair. It seems to be involved in an RecBC-independent recombinational process of DNA repair. It may act with RecF and RecO. The polypeptide is Recombination protein RecR (Shewanella loihica (strain ATCC BAA-1088 / PV-4)).